Reading from the N-terminus, the 204-residue chain is Tat proofreading chaperone DmsD (204 aa).

It belongs to the TorD/DmsD family. DmsD subfamily.

Its function is as follows. Required for biogenesis/assembly of DMSO reductase, but not for the interaction of the DmsA signal peptide with the Tat system. May be part of a chaperone cascade complex that facilitates a folding-maturation pathway for the substrate protein. In Escherichia coli O6:H1 (strain CFT073 / ATCC 700928 / UPEC), this protein is Tat proofreading chaperone DmsD.